The sequence spans 171 residues: Shikimate kinase (171 aa).

14 to 19 (GAGKST) is an ATP binding site. Ser18 contributes to the Mg(2+) binding site. Asp36, Arg60, and Gly82 together coordinate substrate. Arg120 serves as a coordination point for ATP. Arg139 is a binding site for substrate. Gln156 serves as a coordination point for ATP.

Belongs to the shikimate kinase family. In terms of assembly, monomer. It depends on Mg(2+) as a cofactor.

It localises to the cytoplasm. It carries out the reaction shikimate + ATP = 3-phosphoshikimate + ADP + H(+). It participates in metabolic intermediate biosynthesis; chorismate biosynthesis; chorismate from D-erythrose 4-phosphate and phosphoenolpyruvate: step 5/7. Functionally, catalyzes the specific phosphorylation of the 3-hydroxyl group of shikimic acid using ATP as a cosubstrate. This is Shikimate kinase from Shewanella putrefaciens (strain CN-32 / ATCC BAA-453).